We begin with the raw amino-acid sequence, 82 residues long: Acyl carrier protein (82 aa).

Residues 4-79 (PEMESRLKKI…DALNYIEQKL (76 aa)) form the Carrier domain. Serine 39 carries the O-(pantetheine 4'-phosphoryl)serine modification.

This sequence belongs to the acyl carrier protein (ACP) family. 4'-phosphopantetheine is transferred from CoA to a specific serine of apo-ACP by AcpS. This modification is essential for activity because fatty acids are bound in thioester linkage to the sulfhydryl of the prosthetic group.

The protein resides in the cytoplasm. It participates in lipid metabolism; fatty acid biosynthesis. In terms of biological role, carrier of the growing fatty acid chain in fatty acid biosynthesis. The polypeptide is Acyl carrier protein (Roseiflexus sp. (strain RS-1)).